We begin with the raw amino-acid sequence, 450 residues long: Phosphoglucosamine mutase (450 aa).

S102 functions as the Phosphoserine intermediate in the catalytic mechanism. The Mg(2+) site is built by S102, D243, D245, and D247. A Phosphoserine modification is found at S102.

This sequence belongs to the phosphohexose mutase family. It depends on Mg(2+) as a cofactor. Activated by phosphorylation.

It carries out the reaction alpha-D-glucosamine 1-phosphate = D-glucosamine 6-phosphate. Functionally, catalyzes the conversion of glucosamine-6-phosphate to glucosamine-1-phosphate. The sequence is that of Phosphoglucosamine mutase from Rhizobium etli (strain CIAT 652).